Consider the following 254-residue polypeptide: Ribosomal RNA large subunit methyltransferase E (254 aa).

A disordered region spans residues 1–28 (MTTPPRGPDGRPLKVRVKKSRGRTTSSQ). Over residues 13–22 (LKVRVKKSRG) the composition is skewed to basic residues. S-adenosyl-L-methionine-binding residues include Gly80, Trp82, Asp103, Asp119, and Asp143. The active-site Proton acceptor is Lys183. The segment at 231 to 254 (DRAETDDAGTDGTGTAEAQAPRDQ) is disordered.

This sequence belongs to the class I-like SAM-binding methyltransferase superfamily. RNA methyltransferase RlmE family.

Its subcellular location is the cytoplasm. The enzyme catalyses uridine(2552) in 23S rRNA + S-adenosyl-L-methionine = 2'-O-methyluridine(2552) in 23S rRNA + S-adenosyl-L-homocysteine + H(+). In terms of biological role, specifically methylates the uridine in position 2552 of 23S rRNA at the 2'-O position of the ribose in the fully assembled 50S ribosomal subunit. The chain is Ribosomal RNA large subunit methyltransferase E from Xanthobacter autotrophicus (strain ATCC BAA-1158 / Py2).